The chain runs to 219 residues: Ribose-5-phosphate isomerase A (219 aa).

Substrate contacts are provided by residues 28-31, 81-84, and 94-97; these read SGST, DGAD, and KGGG. Glu103 (proton acceptor) is an active-site residue. Lys121 is a binding site for substrate.

It belongs to the ribose 5-phosphate isomerase family. In terms of assembly, homodimer.

The enzyme catalyses aldehydo-D-ribose 5-phosphate = D-ribulose 5-phosphate. The protein operates within carbohydrate degradation; pentose phosphate pathway; D-ribose 5-phosphate from D-ribulose 5-phosphate (non-oxidative stage): step 1/1. Catalyzes the reversible conversion of ribose-5-phosphate to ribulose 5-phosphate. In Histophilus somni (strain 2336) (Haemophilus somnus), this protein is Ribose-5-phosphate isomerase A.